The following is a 573-amino-acid chain: Cytochrome P450 monooxygenase GME11363 (573 aa).

The chain crosses the membrane as a helical span at residues 10 to 30; the sequence is IGVVAAVLLAALILLYRAALP. C519 serves as a coordination point for heme.

The protein belongs to the cytochrome P450 family. It depends on heme as a cofactor.

The protein localises to the membrane. The protein operates within secondary metabolite biosynthesis. In terms of biological role, cytochrome P450 monooxygenase; part of the gene cluster that mediates the biosynthesis of dibenzodioxocinones such as pestalotiollide B, a novel class of inhibitors against cholesterol ester transfer protein (CEPT). The biosynthesis initiates from condensation of acetate and malonate units catalyzed by the non-reducing PKS pks8/GME11356. Pks8/GME11356 lacks a thioesterase (TE) domain, which is important to the cyclizing of the third ring of atrochrysone carboxylic acid, and the esterase GME11355 might play the role of TE and catalyzes the cyclization reaction of the C ring. The lactamase-like protein GME11357 (or other beta-lactamases in Pestalotiopsis microspora) probably hydrolyzes the thioester bond between the ACP of pks8/GME11356 and the intermediate to release atrochrysone carboxylic acid, which is spontaneously dehydrates to form endocrocin anthrone. Endocrocin anthrone is further converted to emodin via the endocrocin intermediate. Emodin is then oxidized by several enzymes such as the Baeyer-Villiger oxidase GME11358, the oxidoreductase GME11367, the short chain dehydrogenase/reductase GME11373, as well as by other oxidoreductases from the cluster, to modify the A and C rings and open the B ring, and finally yield monodictyphenone. The prenyltransferase GME11375 may catalyze the addition reaction between the C5 side chains and the carbon bone of dibenzodioxocinones. The remaining biochemical reactions to the final product dibenzodioxocinones should be methylation catalyzed by methyltransferase GME11366 and reduction and lactonization reaction catalyzed by a series of oxidordeuctases. This Pestalotiopsis microspora protein is Cytochrome P450 monooxygenase GME11363.